The following is a 355-amino-acid chain: S-adenosylmethionine:tRNA ribosyltransferase-isomerase (355 aa).

This sequence belongs to the QueA family. In terms of assembly, monomer.

The protein localises to the cytoplasm. The catalysed reaction is 7-aminomethyl-7-carbaguanosine(34) in tRNA + S-adenosyl-L-methionine = epoxyqueuosine(34) in tRNA + adenine + L-methionine + 2 H(+). It participates in tRNA modification; tRNA-queuosine biosynthesis. Functionally, transfers and isomerizes the ribose moiety from AdoMet to the 7-aminomethyl group of 7-deazaguanine (preQ1-tRNA) to give epoxyqueuosine (oQ-tRNA). This Pectobacterium atrosepticum (strain SCRI 1043 / ATCC BAA-672) (Erwinia carotovora subsp. atroseptica) protein is S-adenosylmethionine:tRNA ribosyltransferase-isomerase.